The following is a 299-amino-acid chain: MDPTLISLGALALAGAAATVSGCAEDLESDVGSQSNPNSQVQLGPQMGNIHRYFNKAISGEPVSYGLYVAVAGTIAWALINAGLNAVLAIIVGSGVAAVVHGAYSVSAFLGRTVGQSKKFGQPVYMDVLTSHIGPIVGHGFIAVFTMTLAAYLATTALGNPFPLPLVALIFGITVGAIGSSTGDVHYGAEREYQKYPFGGGIPVANQGDIDIYAEYGVRNGLDSSYFCSRFGGPLTGLCFGLIIFLDGWRSILGNIIGGDLVTKTSIALLVGLLVVAVAAGINRKLEVYARNKYGPYRN.

Transmembrane regions (helical) follow at residues Ala-57 to Leu-79, Gly-95 to Gly-115, Ile-133 to Leu-153, Leu-158 to Ile-178, Gly-237 to Ile-257, and Val-262 to Ile-282.

This sequence belongs to the MtrE family. In terms of assembly, the complex is composed of 8 subunits; MtrA, MtrB, MtrC, MtrD, MtrE, MtrF, MtrG and MtrH.

The protein resides in the cell membrane. The catalysed reaction is 5-methyl-5,6,7,8-tetrahydromethanopterin + coenzyme M + 2 Na(+)(in) = 5,6,7,8-tetrahydromethanopterin + methyl-coenzyme M + 2 Na(+)(out). It functions in the pathway one-carbon metabolism; methanogenesis from CO(2); methyl-coenzyme M from 5,10-methylene-5,6,7,8-tetrahydromethanopterin: step 2/2. Its function is as follows. Part of a complex that catalyzes the formation of methyl-coenzyme M and tetrahydromethanopterin from coenzyme M and methyl-tetrahydromethanopterin. This is an energy-conserving, sodium-ion translocating step. The protein is Tetrahydromethanopterin S-methyltransferase subunit E of Methanococcus maripaludis (strain C5 / ATCC BAA-1333).